The primary structure comprises 372 residues: Alanine racemase (372 aa).

Lysine 37 (proton acceptor; specific for D-alanine) is an active-site residue. Lysine 37 bears the N6-(pyridoxal phosphate)lysine mark. Arginine 136 provides a ligand contact to substrate. The active-site Proton acceptor; specific for L-alanine is tyrosine 265. Methionine 313 lines the substrate pocket.

The protein belongs to the alanine racemase family. Pyridoxal 5'-phosphate is required as a cofactor.

It catalyses the reaction L-alanine = D-alanine. It participates in amino-acid biosynthesis; D-alanine biosynthesis; D-alanine from L-alanine: step 1/1. Its function is as follows. Catalyzes the interconversion of L-alanine and D-alanine. May also act on other amino acids. This chain is Alanine racemase (alr), found in Synechocystis sp. (strain ATCC 27184 / PCC 6803 / Kazusa).